The following is a 305-amino-acid chain: UDP-3-O-acyl-N-acetylglucosamine deacetylase (305 aa).

3 residues coordinate Zn(2+): histidine 79, histidine 238, and aspartate 242. Catalysis depends on histidine 265, which acts as the Proton donor.

It belongs to the LpxC family. Zn(2+) is required as a cofactor.

The enzyme catalyses a UDP-3-O-[(3R)-3-hydroxyacyl]-N-acetyl-alpha-D-glucosamine + H2O = a UDP-3-O-[(3R)-3-hydroxyacyl]-alpha-D-glucosamine + acetate. It participates in glycolipid biosynthesis; lipid IV(A) biosynthesis; lipid IV(A) from (3R)-3-hydroxytetradecanoyl-[acyl-carrier-protein] and UDP-N-acetyl-alpha-D-glucosamine: step 2/6. Catalyzes the hydrolysis of UDP-3-O-myristoyl-N-acetylglucosamine to form UDP-3-O-myristoylglucosamine and acetate, the committed step in lipid A biosynthesis. The polypeptide is UDP-3-O-acyl-N-acetylglucosamine deacetylase (Cronobacter sakazakii (strain ATCC BAA-894) (Enterobacter sakazakii)).